The primary structure comprises 443 residues: Chromosomal replication initiator protein DnaA (443 aa).

Positions 1–76 (METKALWEKL…KSVLNSYVSV (76 aa)) are domain I, interacts with DnaA modulators. The segment at 76–99 (VDFLTKEIFEKNTKKENKKEPINT) is domain II. Residues 100–320 (VLSENALTFE…GLVNRLLFFG (221 aa)) are domain III, AAA+ region. ATP contacts are provided by Gly-145, Gly-147, Lys-148, and Thr-149. Residues 321 to 443 (IQNDLGHIID…ESLKNEIIGK (123 aa)) are domain IV, binds dsDNA.

It belongs to the DnaA family. In terms of assembly, oligomerizes as a right-handed, spiral filament on DNA at oriC.

Its subcellular location is the cytoplasm. Plays an essential role in the initiation and regulation of chromosomal replication. ATP-DnaA binds to the origin of replication (oriC) to initiate formation of the DNA replication initiation complex once per cell cycle. Binds the DnaA box (a 9 base pair repeat at the origin) and separates the double-stranded (ds)DNA. Forms a right-handed helical filament on oriC DNA; dsDNA binds to the exterior of the filament while single-stranded (ss)DNA is stabiized in the filament's interior. The ATP-DnaA-oriC complex binds and stabilizes one strand of the AT-rich DNA unwinding element (DUE), permitting loading of DNA polymerase. After initiation quickly degrades to an ADP-DnaA complex that is not apt for DNA replication. Binds acidic phospholipids. The sequence is that of Chromosomal replication initiator protein DnaA from Mesoplasma florum (strain ATCC 33453 / NBRC 100688 / NCTC 11704 / L1) (Acholeplasma florum).